A 943-amino-acid chain; its full sequence is Isoleucine--tRNA ligase (943 aa).

Positions proline 59 to histidine 69 match the 'HIGH' region motif. Glutamate 577 provides a ligand contact to L-isoleucyl-5'-AMP. The 'KMSKS' region signature appears at lysine 618–serine 622. Residue lysine 621 participates in ATP binding. Cysteine 906, cysteine 909, cysteine 926, and cysteine 929 together coordinate Zn(2+).

This sequence belongs to the class-I aminoacyl-tRNA synthetase family. IleS type 1 subfamily. Monomer. Zn(2+) serves as cofactor.

Its subcellular location is the cytoplasm. It carries out the reaction tRNA(Ile) + L-isoleucine + ATP = L-isoleucyl-tRNA(Ile) + AMP + diphosphate. Catalyzes the attachment of isoleucine to tRNA(Ile). As IleRS can inadvertently accommodate and process structurally similar amino acids such as valine, to avoid such errors it has two additional distinct tRNA(Ile)-dependent editing activities. One activity is designated as 'pretransfer' editing and involves the hydrolysis of activated Val-AMP. The other activity is designated 'posttransfer' editing and involves deacylation of mischarged Val-tRNA(Ile). In Xanthomonas oryzae pv. oryzae (strain MAFF 311018), this protein is Isoleucine--tRNA ligase.